The following is a 407-amino-acid chain: Na(+)-translocating NADH-quinone reductase subunit F (407 aa).

Residues 3-23 (IILGVVMFTLIVLALTVMILF) form a helical membrane-spanning segment. The 2Fe-2S ferredoxin-type domain occupies 32 to 126 (GDITIDINED…NLKIELPEEI (95 aa)). [2Fe-2S] cluster contacts are provided by Cys69, Cys75, Cys78, and Cys110. Residues 129–269 (VKKWECEVIS…SGPFGEFFAK (141 aa)) enclose the FAD-binding FR-type domain.

The protein belongs to the NqrF family. As to quaternary structure, composed of six subunits; NqrA, NqrB, NqrC, NqrD, NqrE and NqrF. [2Fe-2S] cluster is required as a cofactor. FAD serves as cofactor.

The protein resides in the cell inner membrane. The enzyme catalyses a ubiquinone + n Na(+)(in) + NADH + H(+) = a ubiquinol + n Na(+)(out) + NAD(+). Functionally, NQR complex catalyzes the reduction of ubiquinone-1 to ubiquinol by two successive reactions, coupled with the transport of Na(+) ions from the cytoplasm to the periplasm. The first step is catalyzed by NqrF, which accepts electrons from NADH and reduces ubiquinone-1 to ubisemiquinone by a one-electron transfer pathway. This is Na(+)-translocating NADH-quinone reductase subunit F from Yersinia enterocolitica serotype O:8 / biotype 1B (strain NCTC 13174 / 8081).